The primary structure comprises 224 residues: Ethylene-inducing xylanase 5 (224 aa).

Positions 1 to 16 (MLKSLVVLLLTSRVIA) are cleaved as a signal peptide. In terms of domain architecture, GH11 spans 32–218 (QATPNSQGTH…SSGFAEMTVA (187 aa)). A glycan (N-linked (GlcNAc...) asparagine) is linked at N88. Residue E117 is the Nucleophile of the active site. E205 (proton donor) is an active-site residue.

The protein belongs to the glycosyl hydrolase 11 (cellulase G) family.

The catalysed reaction is Endohydrolysis of (1-&gt;4)-beta-D-xylosidic linkages in xylans.. The protein operates within glycan degradation; xylan degradation. Endo-1,4-beta-xylanase involved in the hydrolysis of xylan, a major structural heterogeneous polysaccharide found in plant biomass representing the second most abundant polysaccharide in the biosphere, after cellulose. May act as an elicitor of plant defense responses in certain plants but does not exhibit any cell death when transiently expressed in N.benthamiana. This is Ethylene-inducing xylanase 5 from Verticillium dahliae (strain VdLs.17 / ATCC MYA-4575 / FGSC 10137) (Verticillium wilt).